The primary structure comprises 360 residues: Putative FBD-associated F-box protein At5g56430 (360 aa).

An F-box domain is found at Met-1–Ala-53. 2 Kelch repeats span residues Ile-140–Asp-186 and Val-235–Glu-285. Positions Lys-276 to Phe-326 constitute an FBD domain.

The sequence is that of Putative FBD-associated F-box protein At5g56430 from Arabidopsis thaliana (Mouse-ear cress).